We begin with the raw amino-acid sequence, 82 residues long: Putative membrane protein insertion efficiency factor (82 aa).

The segment at 63-82 (GGFDPVPLKKDKNSKTTHHH) is disordered.

The protein belongs to the UPF0161 family.

The protein localises to the cell membrane. In terms of biological role, could be involved in insertion of integral membrane proteins into the membrane. The protein is Putative membrane protein insertion efficiency factor of Staphylococcus epidermidis (strain ATCC 35984 / DSM 28319 / BCRC 17069 / CCUG 31568 / BM 3577 / RP62A).